Reading from the N-terminus, the 128-residue chain is Saitohin (128 aa).

The interval 77 to 128 (SYSSEESSRNGAEQGRQLSIEGPFQGQNCPSHPAAALPLPMRGESQATSCQV) is disordered.

In terms of assembly, interacts with PRDX6. Highest expression in placenta, muscle, fetal brain, and adult brain, with lower expression in heart, kidney, stomach, testis, and adrenal gland. In the central nervous system, highest expression is in temporal lobe, hypothalamus, medulla and spinal cord, with lower expression in other brain regions.

The protein localises to the cytoplasm. The protein resides in the nucleus. This Homo sapiens (Human) protein is Saitohin (STH).